The chain runs to 427 residues: MNNKNIDIIQLLYERDLIAQITNQEALIKILKSKSITLYCGFDPTSDSLHIGHLVPLLCLRQFQIFGHRPIILLGGGTGLIGDPSFKDSERKLNLIETVQKWIEKIKYQVSLFVDFSHSQYSQACIVNNYDWLSSISLLTFLRDIGKFFSVNKMINKDAIKKRLQKNNYGISYTEFSYNLLQSYDFTYLHKNYNAILQIGGSDQWGNIISGIDLIHRIYKRTTYGLTMPLLTKSDNTKFGKTEKHTIWLDAKKTSPYTFYQYWINTSDEEVYRFLKFFTNIDVDAINTLKKEDKMKNTKPQAQIILAEEITRLVHGKSGLKTAQKITRNLFTGQIHKLTLDDFEQLFQDGIPTVPLKAGITLQQALVESKLVVSRAQARELISSNSITVNSKKQLKTEYIFCATDRLYNRFTLLRRGKKHHCLITWE.

Tyr39 contributes to the L-tyrosine binding site. Positions Pro44–His53 match the 'HIGH' region motif. The L-tyrosine site is built by Tyr178 and Gln182. Residues Lys238–Thr242 carry the 'KMSKS' region motif. Residue Lys241 coordinates ATP. In terms of domain architecture, S4 RNA-binding spans Ile360 to Gly417.

Belongs to the class-I aminoacyl-tRNA synthetase family. TyrS type 1 subfamily. Homodimer.

The protein resides in the cytoplasm. It carries out the reaction tRNA(Tyr) + L-tyrosine + ATP = L-tyrosyl-tRNA(Tyr) + AMP + diphosphate + H(+). Catalyzes the attachment of tyrosine to tRNA(Tyr) in a two-step reaction: tyrosine is first activated by ATP to form Tyr-AMP and then transferred to the acceptor end of tRNA(Tyr). The chain is Tyrosine--tRNA ligase from Blochmanniella pennsylvanica (strain BPEN).